The primary structure comprises 239 residues: Norbelladine 4'-O-methyltransferase 3 (239 aa).

Residues Val-55, Glu-77, 79–80, Ser-85, Asp-103, and Ala-132 each bind S-adenosyl-L-methionine; that span reads GV. Asp-155 provides a ligand contact to a divalent metal cation. Asp-157 contributes to the S-adenosyl-L-methionine binding site. Residues Asp-181 and Asn-182 each contribute to the a divalent metal cation site.

It belongs to the class I-like SAM-binding methyltransferase superfamily. Cation-dependent O-methyltransferase family. Requires Mg(2+) as cofactor.

It catalyses the reaction norbelladine + S-adenosyl-L-methionine = 4'-O-methylnorbelladine + S-adenosyl-L-homocysteine + H(+). Its pathway is alkaloid biosynthesis. 4'-O-methyltransferase converting norbelladine to 4'-O-methylnorbelladine. 4'-O-methylnorbelladine is a precursor to all Amaryllidaceae alkaloids such as galanthamine, lycorine and haemanthamine, and including haemanthamine- and crinamine-type alkaloids, promising anticancer agents. The sequence is that of Norbelladine 4'-O-methyltransferase 3 from Narcissus aff. pseudonarcissus MK-2014 (Daffodil).